Reading from the N-terminus, the 410-residue chain is MCPTAVPSRVSPVAAAAAADIAGSSESTVSLVADVDKKNSQYKQIFLERFRKKLQSDKTGMNNLESFVELPEGVAPSAASIGPIKRGSEPLPPWIKLKVPKGMTHRPRFNRIRRSMREKNLSTVCEEAKCPNIGECWGGSDEEGTATATIMVMGSHCTRGCRFCSVLTSRRPPPLDPEEPEKVAAAVHEMGVDYIVMTMVDRDDLPDGGASHVCCCIHTIKKKNPELMLEALVGDFHGDLKLVEQLAVTPLSVYAHNIECVERITPRVRDRRASYRQSLQTLEHVTKWTNGNMLTKSSIMLGLGEEEAEVRQTLRDLRTAGVSAVTLGQYLQPSHTRLKVSRYAHPKEFEMWEKEAMDMGFLYCASGPMVRSSYRAGEYYIKNILKQRQSAEGGKAAAAATAVNAGTAIA.

Positions 125, 130, 136, 157, 161, 164, and 373 each coordinate [4Fe-4S] cluster. One can recognise a Radical SAM core domain in the interval 140–362 (SDEEGTATAT…EKEAMDMGFL (223 aa)).

It belongs to the radical SAM superfamily. Lipoyl synthase family. The cofactor is [4Fe-4S] cluster.

It localises to the mitochondrion. The enzyme catalyses [[Fe-S] cluster scaffold protein carrying a second [4Fe-4S](2+) cluster] + N(6)-octanoyl-L-lysyl-[protein] + 2 oxidized [2Fe-2S]-[ferredoxin] + 2 S-adenosyl-L-methionine + 4 H(+) = [[Fe-S] cluster scaffold protein] + N(6)-[(R)-dihydrolipoyl]-L-lysyl-[protein] + 4 Fe(3+) + 2 hydrogen sulfide + 2 5'-deoxyadenosine + 2 L-methionine + 2 reduced [2Fe-2S]-[ferredoxin]. It participates in protein modification; protein lipoylation via endogenous pathway; protein N(6)-(lipoyl)lysine from octanoyl-[acyl-carrier-protein]: step 2/2. Its function is as follows. Catalyzes the radical-mediated insertion of two sulfur atoms into the C-6 and C-8 positions of the octanoyl moiety bound to the lipoyl domains of lipoate-dependent enzymes, thereby converting the octanoylated domains into lipoylated derivatives. The protein is Lipoyl synthase, mitochondrial of Leishmania major.